The sequence spans 427 residues: Histidinol dehydrogenase (427 aa).

Substrate contacts are provided by Ser-232, Gln-254, and His-257. Gln-254 and His-257 together coordinate Zn(2+). Active-site proton acceptor residues include Glu-322 and His-323. Positions 323, 356, 410, and 415 each coordinate substrate. Asp-356 is a Zn(2+) binding site. His-415 provides a ligand contact to Zn(2+).

Belongs to the histidinol dehydrogenase family. It depends on Zn(2+) as a cofactor.

The catalysed reaction is L-histidinol + 2 NAD(+) + H2O = L-histidine + 2 NADH + 3 H(+). The protein operates within amino-acid biosynthesis; L-histidine biosynthesis; L-histidine from 5-phospho-alpha-D-ribose 1-diphosphate: step 9/9. Functionally, catalyzes the sequential NAD-dependent oxidations of L-histidinol to L-histidinaldehyde and then to L-histidine. This chain is Histidinol dehydrogenase, found in Listeria monocytogenes serotype 4b (strain F2365).